Consider the following 217-residue polypeptide: Meiotic expression up-regulated protein 29 (217 aa).

Residues 1-21 form the signal peptide; the sequence is MFVVKTAVLLFFALFIGNTYA. The Extracellular portion of the chain corresponds to 22-133; it reads YTYSLDRIQA…SGVLLHRPWK (112 aa). Asn84 carries an N-linked (GlcNAc...) asparagine glycan. A helical transmembrane segment spans residues 134–154; the sequence is LFSLKPFTAAFVLLLAASYLA. Topologically, residues 155 to 217 are cytoplasmic; the sequence is TACFRMLGYL…VPVPVLDESV (63 aa).

The protein resides in the membrane. This is Meiotic expression up-regulated protein 29 (meu29) from Schizosaccharomyces pombe (strain 972 / ATCC 24843) (Fission yeast).